A 102-amino-acid polypeptide reads, in one-letter code: MPVAVGVIQTDGFPAVLAAADAMVKAASVTLVSFDKAERAQFYVAVRGPVSEVERSMEAGIAAAEETYNGTVITHYMIPNPPDNVETVMPIAYSDEVEPFRV.

A BMC domain is found at 4–90 (AVGVIQTDGF…PPDNVETVMP (87 aa)).

Belongs to the bacterial microcompartments protein family. CcmK subfamily. In terms of assembly, interacts stably with CcmK4, forming heterohexamers that can make dodecamers. Heterohexamers have a 1:2 CcmK3:CcmK4 stoichiometry. Upon expression in E.coli forms oligomers that could be dimers or trimers, but never hexamers; bulky residues in the pore region probably preclude the formation of homohexamers.

The protein localises to the carboxysome. Its function is as follows. A probably non-essential, minor shell protein of the carboxysome, a polyhedral inclusion where RuBisCO (ribulose bisphosphate carboxylase, rbcL-rbcS) is sequestered. Hexamers form sheets that form the facets of the polyhedral carboxysome. In PCC 7418 there are several CcmK paralogs with presumably functional differences. This subunit probably only makes heterohexamers with CcmK4. Heterohexamers can also make dodecamers, formation depends on buffer conditions. This Halothece sp. (strain PCC 7418) (Synechococcus sp. (strain PCC 7418)) protein is Carboxysome shell protein CcmK3.